Consider the following 171-residue polypeptide: MPLLDSFTVDHTRMEAPAVRVAKTMNTPHGDAITVFDLRFCVPNKEVMPERGIHTLEHLFAGFMRNHLNGNGVEIIDISPMGCRTGFYMSLIGTPDEQRVADAWKAAMEDVLKVQDQNQIPELNVYQCGTYQMHSLQEAQDIARSILERDVRINSNEELALPKEKLQELHI.

Residues H54, H58, and C128 each contribute to the Fe cation site.

It belongs to the LuxS family. As to quaternary structure, homodimer. It depends on Fe cation as a cofactor.

It catalyses the reaction S-(5-deoxy-D-ribos-5-yl)-L-homocysteine = (S)-4,5-dihydroxypentane-2,3-dione + L-homocysteine. Involved in the synthesis of autoinducer 2 (AI-2) which is secreted by bacteria and is used to communicate both the cell density and the metabolic potential of the environment. The regulation of gene expression in response to changes in cell density is called quorum sensing. Catalyzes the transformation of S-ribosylhomocysteine (RHC) to homocysteine (HC) and 4,5-dihydroxy-2,3-pentadione (DPD). This is S-ribosylhomocysteine lyase from Escherichia fergusonii (strain ATCC 35469 / DSM 13698 / CCUG 18766 / IAM 14443 / JCM 21226 / LMG 7866 / NBRC 102419 / NCTC 12128 / CDC 0568-73).